Reading from the N-terminus, the 100-residue chain is Sec-independent protein translocase protein TatA (100 aa).

Residues 1 to 21 form a helical membrane-spanning segment; it reads MGALKPWHIAVLVVVLILLFG. The span at 44 to 55 shows a compositional bias: basic and acidic residues; the sequence is KSLHDDDRDLAE. Residues 44–100 form a disordered region; it reads KSLHDDDRDLAEKANAQAGYQPLPPQVQQEPYPQQTPYQAPPQQQPVVDPVQRARDS. Residues 69–81 show a composition bias toward low complexity; the sequence is QVQQEPYPQQTPY.

This sequence belongs to the TatA/E family. As to quaternary structure, the Tat system comprises two distinct complexes: a TatABC complex, containing multiple copies of TatA, TatB and TatC subunits, and a separate TatA complex, containing only TatA subunits. Substrates initially bind to the TatABC complex, which probably triggers association of the separate TatA complex to form the active translocon.

Its subcellular location is the cell membrane. In terms of biological role, part of the twin-arginine translocation (Tat) system that transports large folded proteins containing a characteristic twin-arginine motif in their signal peptide across membranes. TatA could form the protein-conducting channel of the Tat system. The chain is Sec-independent protein translocase protein TatA from Salinispora arenicola (strain CNS-205).